The primary structure comprises 274 residues: Large ribosomal subunit protein uL2 (274 aa).

Positions 222-257 are disordered; it reads GVAMNPVDHPHGGGEGRTSGGRHPVSPWGVPTKGYK.

This sequence belongs to the universal ribosomal protein uL2 family. As to quaternary structure, part of the 50S ribosomal subunit. Forms a bridge to the 30S subunit in the 70S ribosome.

In terms of biological role, one of the primary rRNA binding proteins. Required for association of the 30S and 50S subunits to form the 70S ribosome, for tRNA binding and peptide bond formation. It has been suggested to have peptidyltransferase activity; this is somewhat controversial. Makes several contacts with the 16S rRNA in the 70S ribosome. The sequence is that of Large ribosomal subunit protein uL2 from Nitrosococcus oceani (strain ATCC 19707 / BCRC 17464 / JCM 30415 / NCIMB 11848 / C-107).